The sequence spans 299 residues: Phosphoribosylaminoimidazole-succinocarboxamide synthase (299 aa).

Belongs to the SAICAR synthetase family.

The catalysed reaction is 5-amino-1-(5-phospho-D-ribosyl)imidazole-4-carboxylate + L-aspartate + ATP = (2S)-2-[5-amino-1-(5-phospho-beta-D-ribosyl)imidazole-4-carboxamido]succinate + ADP + phosphate + 2 H(+). The protein operates within purine metabolism; IMP biosynthesis via de novo pathway; 5-amino-1-(5-phospho-D-ribosyl)imidazole-4-carboxamide from 5-amino-1-(5-phospho-D-ribosyl)imidazole-4-carboxylate: step 1/2. This Schizosaccharomyces pombe (strain 972 / ATCC 24843) (Fission yeast) protein is Phosphoribosylaminoimidazole-succinocarboxamide synthase (ade7).